The chain runs to 305 residues: MAMYSLFRSVRSEVVKGCLTQHVQSLFTSCPSLAADKALLLQLRKSTGYTFVNCKKALEKCNNDITQAESWLHEQAKKEGWSKATKLEGRKAKEGLIGLMMHDNAAVMVEVNCETDFVARNEKFQQLVKDVALSVMAHQSTSKKTGFIKSVLSSEDMSKLNAPDGPSLADQLALTIGRLGENIAMRRAVSLSVPSDWHIGSYIHGTVAGQVGIEMGRYGSLVVFQGEPKEGTYALGRKLAQHVMGEAPVSLGNMDDLSCGDSETRLLPQTFLPDPKYTVAQYLTLQDARVLDFIRFQCGESSSQE.

This sequence belongs to the EF-Ts family.

It is found in the mitochondrion. Functionally, associates with the EF-Tu.GDP complex and induces the exchange of GDP to GTP. It remains bound to the aminoacyl-tRNA.EF-Tu.GTP complex up to the GTP hydrolysis stage on the ribosome. The protein is Elongation factor Ts, mitochondrial (tsfm) of Danio rerio (Zebrafish).